A 204-amino-acid polypeptide reads, in one-letter code: Casparian strip membrane protein 2 (204 aa).

Residues 1 to 42 (MKNESTTIDVPAESSSAMKGKAPLIGVARDHTTSGSGGYNRG) are Cytoplasmic-facing. The helical transmembrane segment at 43-63 (LSIFDFLLRLAAIVAALAAAA) threads the bilayer. At 64 to 92 (TMGTSDETLPFFTQFLQFEASYDDLPTFQ) the chain is on the extracellular side. The helical transmembrane segment at 93-113 (FFVIAMALVGGYLVLSLPISV) threads the bilayer. Over 114–125 (VTILRPLATAPR) the chain is Cytoplasmic. Residues 126–146 (LLLLVLDTAVLALNTAAASSA) form a helical membrane-spanning segment. Residues 147–178 (AAISYLAHSGNQNTNWLPICQQFGDFCQKSSG) lie on the Extracellular side of the membrane. The chain crosses the membrane as a helical span at residues 179 to 199 (AVVSAFISVVFFTILVVISGV). The Cytoplasmic portion of the chain corresponds to 200-204 (ALKRH).

This sequence belongs to the Casparian strip membrane proteins (CASP) family. Homodimer and heterodimers.

The protein localises to the cell membrane. In terms of biological role, regulates membrane-cell wall junctions and localized cell wall deposition. Required for establishment of the Casparian strip membrane domain (CSD) and the subsequent formation of Casparian strips, a cell wall modification of the root endodermis that determines an apoplastic barrier between the intraorganismal apoplasm and the extraorganismal apoplasm and prevents lateral diffusion. This is Casparian strip membrane protein 2 from Arabidopsis lyrata subsp. lyrata (Lyre-leaved rock-cress).